Here is a 105-residue protein sequence, read N- to C-terminus: Iron-sulfur cluster assembly protein CyaY (105 aa).

Belongs to the frataxin family.

Its function is as follows. Involved in iron-sulfur (Fe-S) cluster assembly. May act as a regulator of Fe-S biogenesis. The chain is Iron-sulfur cluster assembly protein CyaY from Photobacterium profundum (strain SS9).